Consider the following 318-residue polypeptide: Probable cell division protein WhiA (318 aa).

The segment at residues 281 to 314 (SLKELGQMLVPPVGKSGVNHRLRKIEEISKKLKE) is a DNA-binding region (H-T-H motif).

It belongs to the WhiA family.

Involved in cell division and chromosome segregation. The sequence is that of Probable cell division protein WhiA from Thermoanaerobacter pseudethanolicus (strain ATCC 33223 / 39E) (Clostridium thermohydrosulfuricum).